Consider the following 262-residue polypeptide: Diaminopimelate epimerase (262 aa).

Residues N17, Q45, and N63 each coordinate substrate. C72 acts as the Proton donor in catalysis. Residues 73-74 (GN), N154, N187, and 205-206 (ER) each bind substrate. The active-site Proton acceptor is the C214. A substrate-binding site is contributed by 215-216 (GS).

This sequence belongs to the diaminopimelate epimerase family. As to quaternary structure, homodimer.

It localises to the cytoplasm. It carries out the reaction (2S,6S)-2,6-diaminopimelate = meso-2,6-diaminopimelate. Its pathway is amino-acid biosynthesis; L-lysine biosynthesis via DAP pathway; DL-2,6-diaminopimelate from LL-2,6-diaminopimelate: step 1/1. In terms of biological role, catalyzes the stereoinversion of LL-2,6-diaminopimelate (L,L-DAP) to meso-diaminopimelate (meso-DAP), a precursor of L-lysine and an essential component of the bacterial peptidoglycan. In Wolbachia sp. subsp. Drosophila simulans (strain wRi), this protein is Diaminopimelate epimerase.